The following is a 148-amino-acid chain: MPSKLRKTRKLRGHVSHGHGRIGKHRKHPGGRGNAGGMHHHRINFDKYHPGYFGKVGMRHYHLKKNQSFCPTINLDKLWTLVSEQTRLNHAKNLEGPAPIIDAVHAGYYKVLGKGKLPKQPVIVKAKFFSRKAEEKIKSVGGACVLGA.

The segment covering 1–30 (MPSKLRKTRKLRGHVSHGHGRIGKHRKHPG) has biased composition (basic residues). The segment at 1–38 (MPSKLRKTRKLRGHVSHGHGRIGKHRKHPGGRGNAGGM) is disordered.

The protein belongs to the universal ribosomal protein uL15 family. Component of the large ribosomal subunit.

It localises to the cytoplasm. In terms of biological role, component of the large ribosomal subunit. The ribosome is a large ribonucleoprotein complex responsible for the synthesis of proteins in the cell. The chain is Large ribosomal subunit protein uL15 (rpl27a) from Xenopus laevis (African clawed frog).